The sequence spans 220 residues: UPF0319 protein CKO_02102 (220 aa).

An N-terminal signal peptide occupies residues 1–20 (MKTGIITMLFVLYLPVTAFA).

Belongs to the UPF0319 family.

The sequence is that of UPF0319 protein CKO_02102 from Citrobacter koseri (strain ATCC BAA-895 / CDC 4225-83 / SGSC4696).